Consider the following 285-residue polypeptide: K88 fimbrial protein AD (285 aa).

Residues 1-21 (MKKTLIALAIAASAASGMAHA) form the signal peptide.

The protein belongs to the fimbrial K88 protein family. As to quaternary structure, K88 fimbria, 0.1-1 micrometer in length and 7 nanometers in diameter, is composed of about 100 identical subunits.

It localises to the fimbrium. In terms of biological role, K88 major fimbrial subunit. Fimbriae (also called pili), are polar filaments radiating from the surface of the bacterium to a length of 0.5-1.5 micrometers and numbering 100-300 per cell. They enable bacteria to colonize the epithelium of specific host organs. The chain is K88 fimbrial protein AD (faeG) from Escherichia coli.